The chain runs to 235 residues: Sugar fermentation stimulation protein homolog (235 aa).

This sequence belongs to the SfsA family.

The chain is Sugar fermentation stimulation protein homolog from Allorhizobium ampelinum (strain ATCC BAA-846 / DSM 112012 / S4) (Agrobacterium vitis (strain S4)).